A 21-amino-acid chain; its full sequence is Large ribosomal subunit protein uL10 (21 aa).

It belongs to the universal ribosomal protein uL10 family. Part of the ribosomal stalk of the 50S ribosomal subunit. The N-terminus interacts with L11 and the large rRNA to form the base of the stalk. The C-terminus forms an elongated spine to which L12 dimers bind in a sequential fashion forming a multimeric L10(L12)X complex.

Forms part of the ribosomal stalk, playing a central role in the interaction of the ribosome with GTP-bound translation factors. In Bacillus cereus, this protein is Large ribosomal subunit protein uL10 (rplJ).